The following is a 98-amino-acid chain: Envelope glycoprotein N (98 aa).

Residues 1–24 (MVSSAGLSLTLVAALCALVAPALS) form the signal peptide. Topologically, residues 25–60 (SIVSTEGPLPLLREESRINFWNAACAARGVPVDQPT) are virion surface. The chain crosses the membrane as a helical span at residues 61-81 (AAAVTFYICLLAVLVVALGYA). At 82-98 (TRTCTRMLHASPAGRRV) the chain is on the intravirion side.

It belongs to the herpesviridae glycoprotein N family. Interacts (via N-terminus) with gM (via N-terminus). The gM-gN heterodimer forms the gCII complex. Post-translationally, O-glycosylated.

It is found in the virion membrane. The protein localises to the host membrane. Its subcellular location is the host Golgi apparatus. The protein resides in the host trans-Golgi network. Its function is as follows. Envelope glycoprotein necessary for proper maturation of gM and modulation of its membrane fusion activity. Also plays a critical role in virion morphogenesis. This Suid herpesvirus 1 (SuHV-1) protein is Envelope glycoprotein N.